The sequence spans 204 residues: Glutathione S-transferase (204 aa).

Residues 3-80 (PSYKLTYCPV…YLGKQFGLSG (78 aa)) enclose the GST N-terminal domain. Glutathione is bound by residues Tyr9, Trp40, Lys44, 50–52 (GKT), and 64–65 (QS). One can recognise a GST C-terminal domain in the interval 82-204 (DDWENLEIDM…WVAKRPPTDL (123 aa)).

The protein belongs to the GST superfamily. Sigma family.

The catalysed reaction is RX + glutathione = an S-substituted glutathione + a halide anion + H(+). The chain is Glutathione S-transferase from Blattella germanica (German cockroach).